We begin with the raw amino-acid sequence, 49 residues long: Protein YdfW (49 aa).

The segment at 16-49 (PKADHPWLTRRTQSHQQVKPPKLPKKKPDPDKKD) is disordered.

Its function is as follows. May be involved in H(2) production during fermentative growth. This chain is Protein YdfW (ydfW), found in Escherichia coli (strain K12).